Here is an 85-residue protein sequence, read N- to C-terminus: Large ribosomal subunit protein bL27 (85 aa).

Positions 1 to 10 (MAQKKGGGST) are enriched in gly residues. The tract at residues 1 to 21 (MAQKKGGGSTRNGRDSQPKML) is disordered.

This sequence belongs to the bacterial ribosomal protein bL27 family.

The chain is Large ribosomal subunit protein bL27 from Polaromonas naphthalenivorans (strain CJ2).